The chain runs to 880 residues: Alanine--tRNA ligase (880 aa).

Positions 571, 575, 673, and 677 each coordinate Zn(2+).

Belongs to the class-II aminoacyl-tRNA synthetase family. The cofactor is Zn(2+).

It localises to the cytoplasm. The catalysed reaction is tRNA(Ala) + L-alanine + ATP = L-alanyl-tRNA(Ala) + AMP + diphosphate. In terms of biological role, catalyzes the attachment of alanine to tRNA(Ala) in a two-step reaction: alanine is first activated by ATP to form Ala-AMP and then transferred to the acceptor end of tRNA(Ala). Also edits incorrectly charged Ser-tRNA(Ala) and Gly-tRNA(Ala) via its editing domain. The sequence is that of Alanine--tRNA ligase from Oleidesulfovibrio alaskensis (strain ATCC BAA-1058 / DSM 17464 / G20) (Desulfovibrio alaskensis).